Reading from the N-terminus, the 488-residue chain is MKIRVRFAPSPTGFLHIGGVRTALFNYLFAKRYGGTFVLRIEDTDELRSTEESTQAIFDGLEWTKLLWDEGPFRDGKENGPYPPYLQSERVKAGIYQKYIDQLLEEGKAYKCYCTPEELEAMREEAAAKKLPPRYPGKCKHLTKDEQAALEAQGRKPVIRFNMPSEGSVEWADLIRGPVSFASKDLYDLVISKPSGFPTYNFACVIDDHLMEMSHIIRGEDHISNTPMQIQMYKAFGWTPPEFGHLPMIHGSDGTKLSKRHGATNVIEYQKQGYLSEALVNYLALLGWSNSESQQLFAPGELEQKFDIKGVQKSPAIFDNAKLDWMNSEYIRATPISKLTDLAIPFIKEENIDISKTDRAALENIIAIEQEKYRTLKEIPGLIKFFFEDVVFEEGAKEKVYGKPESKDVLLGITRVYQNIEPFKEADLEAATRAFAKDNGFKTGQIFHPVRVAVSGRTHGPTLFKMLELLGKETVIKRLNEAAKYSNI.

Positions 9-19 (PSPTGFLHIGG) match the 'HIGH' region motif. Zn(2+) contacts are provided by C112, C114, C139, and H141. Residues 256-260 (KLSKR) carry the 'KMSKS' region motif. K259 serves as a coordination point for ATP.

Belongs to the class-I aminoacyl-tRNA synthetase family. Glutamate--tRNA ligase type 1 subfamily. As to quaternary structure, monomer. Zn(2+) is required as a cofactor.

It is found in the cytoplasm. The enzyme catalyses tRNA(Glu) + L-glutamate + ATP = L-glutamyl-tRNA(Glu) + AMP + diphosphate. Catalyzes the attachment of glutamate to tRNA(Glu) in a two-step reaction: glutamate is first activated by ATP to form Glu-AMP and then transferred to the acceptor end of tRNA(Glu). This is Glutamate--tRNA ligase from Elusimicrobium minutum (strain Pei191).